A 76-amino-acid polypeptide reads, in one-letter code: uncharacterized protein (76 aa).

A helical transmembrane segment spans residues 18–38 (FISALFFFNAVCIVSDNLLII).

The protein resides in the cell membrane. This is an uncharacterized protein from Escherichia coli O6:H1 (strain CFT073 / ATCC 700928 / UPEC).